The following is a 698-amino-acid chain: Phenylalanine aminomutase (L-beta-phenylalanine forming) (698 aa).

Residue Tyr80 is the Proton donor/acceptor of the active site. The 5-imidazolinone (Ala-Gly) cross-link spans 175 to 177; sequence ASG. Ser176 is modified (2,3-didehydroalanine (Ser)). (E)-cinnamate is bound by residues Asn231, Gln319, Arg325, Asn355, Lys427, Glu455, and Asn458.

Belongs to the PAL/histidase family. As to quaternary structure, homotetramer. In terms of processing, contains an active site 4-methylidene-imidazol-5-one (MIO), which is formed autocatalytically by cyclization and dehydration of residues Ala-Ser-Gly.

The protein localises to the cytoplasm. The catalysed reaction is L-phenylalanine = L-beta-phenylalanine. It catalyses the reaction L-phenylalanine = (E)-cinnamate + NH4(+). It participates in alkaloid biosynthesis; taxol biosynthesis. Its pathway is phenylpropanoid metabolism; trans-cinnamate biosynthesis; trans-cinnamate from L-phenylalanine: step 1/1. Phenylalanine aminomutase that catalyzes the rearrangement of L-phenylalanine to R-beta-phenylalanine. Catalyzes the first committed step in the biosynthesis of the side chain of the alkaloid taxol (paclitaxel), a widely-used compound with antitumor activity. Also has low phenylalanine ammonia-lyase activity. This Taxus canadensis (Canadian yew) protein is Phenylalanine aminomutase (L-beta-phenylalanine forming) (pam).